A 305-amino-acid chain; its full sequence is Nucleotide-binding protein Rxyl_2009 (305 aa).

Residue G24–S31 participates in ATP binding. D75 to G78 serves as a coordination point for GTP.

This sequence belongs to the RapZ-like family.

Functionally, displays ATPase and GTPase activities. The protein is Nucleotide-binding protein Rxyl_2009 of Rubrobacter xylanophilus (strain DSM 9941 / JCM 11954 / NBRC 16129 / PRD-1).